The primary structure comprises 453 residues: Macrophage scavenger receptor types I and II (453 aa).

Over methionine 1–lysine 50 the chain is Cytoplasmic. A Phosphoserine modification is found at serine 27. A helical; Signal-anchor for type II membrane protein membrane pass occupies residues threonine 51–leucine 76. Residues lysine 77–arginine 108 are spacer. At lysine 77–threonine 453 the chain is on the extracellular side. N-linked (GlcNAc...) asparagine glycans are attached at residues asparagine 82, asparagine 101, asparagine 142, asparagine 183, asparagine 220, asparagine 248, and asparagine 266. Residues glutamate 194–leucine 255 are a coiled coil. 2 disordered regions span residues isoleucine 267–proline 295 and proline 313–serine 349. A Collagen-like domain is found at glycine 272–glycine 343. An SRCR domain is found at valine 352–threonine 452. 3 cysteine pairs are disulfide-bonded: cysteine 377–cysteine 441, cysteine 390–cysteine 451, and cysteine 421–cysteine 431.

In terms of assembly, homotrimer. Interacts with MYO18A.

It localises to the membrane. In terms of biological role, membrane glycoproteins implicated in the pathologic deposition of cholesterol in arterial walls during atherogenesis. Two types of receptor subunits exist. These receptors mediate the endocytosis of a diverse group of macromolecules, including modified low density lipoproteins (LDL). This is Macrophage scavenger receptor types I and II (MSR1) from Bos taurus (Bovine).